Reading from the N-terminus, the 604-residue chain is Aspartate--tRNA(Asp/Asn) ligase (604 aa).

Glu-175 contacts L-aspartate. Positions 199–202 (QQFK) are aspartate. L-aspartate-binding residues include Arg-221 and His-456. 221–223 (RDE) contributes to the ATP binding site. Glu-496 provides a ligand contact to ATP. Residue Arg-503 coordinates L-aspartate. 548–551 (GVDR) is an ATP binding site.

The protein belongs to the class-II aminoacyl-tRNA synthetase family. Type 1 subfamily. Homodimer.

It localises to the cytoplasm. It catalyses the reaction tRNA(Asx) + L-aspartate + ATP = L-aspartyl-tRNA(Asx) + AMP + diphosphate. Its function is as follows. Aspartyl-tRNA synthetase with relaxed tRNA specificity since it is able to aspartylate not only its cognate tRNA(Asp) but also tRNA(Asn). Reaction proceeds in two steps: L-aspartate is first activated by ATP to form Asp-AMP and then transferred to the acceptor end of tRNA(Asp/Asn). In Methylobacterium nodulans (strain LMG 21967 / CNCM I-2342 / ORS 2060), this protein is Aspartate--tRNA(Asp/Asn) ligase.